The following is a 283-amino-acid chain: Thymidylate synthase (283 aa).

DUMP is bound at residue Arg22. The active-site Nucleophile is Cys160. DUMP-binding positions include 180-183, Asn191, and 221-223; these read RSCD and HIY. Residue Asp183 coordinates (6R)-5,10-methylene-5,6,7,8-tetrahydrofolate. Residue Ser282 coordinates (6R)-5,10-methylene-5,6,7,8-tetrahydrofolate.

It belongs to the thymidylate synthase family. Bacterial-type ThyA subfamily. In terms of assembly, homodimer.

The protein resides in the cytoplasm. The enzyme catalyses dUMP + (6R)-5,10-methylene-5,6,7,8-tetrahydrofolate = 7,8-dihydrofolate + dTMP. The protein operates within pyrimidine metabolism; dTTP biosynthesis. Catalyzes the reductive methylation of 2'-deoxyuridine-5'-monophosphate (dUMP) to 2'-deoxythymidine-5'-monophosphate (dTMP) while utilizing 5,10-methylenetetrahydrofolate (mTHF) as the methyl donor and reductant in the reaction, yielding dihydrofolate (DHF) as a by-product. This enzymatic reaction provides an intracellular de novo source of dTMP, an essential precursor for DNA biosynthesis. The polypeptide is Thymidylate synthase (Shewanella halifaxensis (strain HAW-EB4)).